Reading from the N-terminus, the 306-residue chain is Ribose-5-phosphate isomerase (306 aa).

The disordered stretch occupies residues 45–68 (GRAQFGVGSTSTSSGDANSVCPAP). The span at 51–61 (VGSTSTSSGDA) shows a compositional bias: polar residues. Ser102 is subject to Phosphoserine.

It belongs to the ribose 5-phosphate isomerase family.

The enzyme catalyses aldehydo-D-ribose 5-phosphate = D-ribulose 5-phosphate. It functions in the pathway carbohydrate degradation; pentose phosphate pathway; D-ribose 5-phosphate from D-ribulose 5-phosphate (non-oxidative stage): step 1/1. This Sus scrofa (Pig) protein is Ribose-5-phosphate isomerase.